A 512-amino-acid polypeptide reads, in one-letter code: Acid-sensing ion channel 2 (512 aa).

Residues 1–37 (MDLKESPSEGSLQPSSIQIFANTSTLHGIRHIFVYGP) lie on the Cytoplasmic side of the membrane. Phosphoserine occurs at positions 8 and 11. A helical membrane pass occupies residues 38 to 58 (LTIRRVLWAVAFVGSLGLLLV). Residues 59–427 (ESSERVSYYF…EQKKAYEVAA (369 aa)) are Extracellular-facing. Disulfide bonds link cysteine 92–cysteine 193, cysteine 289–cysteine 364, cysteine 307–cysteine 360, cysteine 311–cysteine 358, cysteine 320–cysteine 342, and cysteine 322–cysteine 334. N-linked (GlcNAc...) asparagine glycosylation is found at asparagine 365 and asparagine 392. The helical transmembrane segment at 428 to 448 (LLGDIGGQMGLFIGASLLTIL) threads the bilayer. Positions 441–443 (GAS) match the GAS motif; ion selectivity filter motif. Residues 449–512 (ELFDYIYELI…ALGTLEEIAC (64 aa)) lie on the Cytoplasmic side of the membrane.

This sequence belongs to the amiloride-sensitive sodium channel (TC 1.A.6) family. ASIC2 subfamily. In terms of assembly, can form homotrimers. Heterotrimer; forms functional heterotrimers producing channel with different properties. Forms heterotrimers with ASIC1; while ASIC1 determines current amplitude, ASIC2 influences the properties of the current. Forms heterotrimers with ASIC3; resulting in channels with distinct properties. Interacts with STOM; STOM regulates the gating of ASIC2-containing channels. Interacts with PICK1; promotes ASIC3 phosphorylation by PKC and activation of ASIC2/ASIC3 heterotrimers. Expressed in sciatic nerve and dorsal root ganglion (DRG) (at protein level). Both isoforms display the same expression pattern except in DRG where isoform 2 is more abundantly expressed. Widely distributed throughout the brain. Highly expressed in the main olfactory bulb, neo- and allo-cortical regions, hippocampal formation, habenula, basolateral amygdaloid nuclei, and cerebellum. In the olfactory system, expressed in the glomerular cell layer, the internal granular layer, and the mitral and internal plexiform cell layers. Within the glomerular layer, restricted to the periglomerular cells. In the neocortex, strongly expressed in the large pyramidal neurons in all cortical layers as well as in the oligo-, astro-, or micro-glia cells. In the hippocampal formation, expressed in dentate granule cells and hilar neurons, as well as in pyramidal cells of CA1-CA3 subfields. Expressed in stratum oriens and radiatum of all subfields. Within the thalamus, expressed moderately in the medial and lateral habenula. In the cerebellar cortex expressed in Purkinje cells and granule cells. Expressed at low levels in choroid plexus.

It is found in the cell membrane. The enzyme catalyses Na(+)(in) = Na(+)(out). It carries out the reaction K(+)(in) = K(+)(out). The catalysed reaction is Li(+)(in) = Li(+)(out). Its activity is regulated as follows. Inhibited by the diuretic drug amiloride. Inhibited by gadolinium ions, the heterotrimer with ASIC3 being more sensitive. Zn(2+) potentiates the acid activation of ASIC2-containing homomeric and heteromeric channels. The snake venom mambalgin-1 and mambalgin-2 inhibit the homotrimers composed of ASIC1 and ASIC2 and have strong analgesic effects. Functionally, forms pH-gated trimeric sodium channels that act as postsynaptic excitatory sensors in the nervous system. Upon extracellular acidification, these channels generate rapid, transient inward currents that fully desensitize. Highly selective for sodium, they are permeable to other cations. By forming heterotrimeric channels with ASIC1, could contribute to synaptic plasticity, learning, and memory. Additionally, as acid sensors at nerve terminals, plays a role in mechanosensation and phototransduction. Has no pH-gated sodium channel activity per se but can associate with other ASICs to produce functional channels with specific properties. This Rattus norvegicus (Rat) protein is Acid-sensing ion channel 2.